The chain runs to 106 residues: uncharacterized protein (106 aa).

This is an uncharacterized protein from Enterobacteria phage T4 (Bacteriophage T4).